Reading from the N-terminus, the 104-residue chain is MAAKIKKNDQVIVLIGKDKGKIGIVRKVIAKSKVIVEGVNIVKKHTKPSPSQNKKGGIVEQESSINISNIAILNPTTKKSDRIGFRVKNGKKVRFFKSNNTICN.

This sequence belongs to the universal ribosomal protein uL24 family. As to quaternary structure, part of the 50S ribosomal subunit.

Functionally, one of two assembly initiator proteins, it binds directly to the 5'-end of the 23S rRNA, where it nucleates assembly of the 50S subunit. In terms of biological role, one of the proteins that surrounds the polypeptide exit tunnel on the outside of the subunit. The sequence is that of Large ribosomal subunit protein uL24 from Buchnera aphidicola subsp. Baizongia pistaciae (strain Bp).